A 723-amino-acid polypeptide reads, in one-letter code: Protein Hook homolog (723 aa).

Positions 4 to 120 (TELCECLVQW…RLLQLILGCA (117 aa)) constitute a Calponin-homology (CH) domain. Coiled-coil stretches lie at residues 162-423 (VLPE…MQLQ) and 457-665 (EIKE…IVSA). A disordered region spans residues 682 to 723 (LANGGPMQGGQSFLARQRQATSRRTTVSTTHPGHARSVNFVN). Residues 696–711 (ARQRQATSRRTTVSTT) show a composition bias toward low complexity.

This sequence belongs to the hook family. Interacts with microtubules.

Its subcellular location is the cytoplasm. The protein localises to the cytoskeleton. Functionally, may function to promote vesicle trafficking and/or fusion. May act to link a number of membrane-bound organelles to the cytoskeleton. The polypeptide is Protein Hook homolog (Branchiostoma floridae (Florida lancelet)).